The primary structure comprises 296 residues: Putative S-adenosyl-L-methionine-dependent methyltransferase MAV_4764 (296 aa).

S-adenosyl-L-methionine is bound by residues Asp-121 and 150–151; that span reads DL.

The protein belongs to the UPF0677 family.

Exhibits S-adenosyl-L-methionine-dependent methyltransferase activity. The sequence is that of Putative S-adenosyl-L-methionine-dependent methyltransferase MAV_4764 from Mycobacterium avium (strain 104).